Reading from the N-terminus, the 383-residue chain is Acetylornithine deacetylase (383 aa).

Residue H80 coordinates Zn(2+). Residue D82 is part of the active site. D112 contacts Zn(2+). E144 is an active-site residue. Residues E145, E169, and H355 each coordinate Zn(2+).

This sequence belongs to the peptidase M20A family. ArgE subfamily. In terms of assembly, homodimer. It depends on Zn(2+) as a cofactor. Co(2+) is required as a cofactor. The cofactor is glutathione.

Its subcellular location is the cytoplasm. The catalysed reaction is N(2)-acetyl-L-ornithine + H2O = L-ornithine + acetate. It participates in amino-acid biosynthesis; L-arginine biosynthesis; L-ornithine from N(2)-acetyl-L-ornithine (linear): step 1/1. Its function is as follows. Catalyzes the hydrolysis of the amide bond of N(2)-acetylated L-amino acids. Cleaves the acetyl group from N-acetyl-L-ornithine to form L-ornithine, an intermediate in L-arginine biosynthesis pathway, and a branchpoint in the synthesis of polyamines. This chain is Acetylornithine deacetylase, found in Salmonella typhi.